Here is a 288-residue protein sequence, read N- to C-terminus: Bifunctional protein FolD (288 aa).

An NADP(+)-binding site is contributed by 166-168 (GRS).

It belongs to the tetrahydrofolate dehydrogenase/cyclohydrolase family. In terms of assembly, homodimer.

The catalysed reaction is (6R)-5,10-methylene-5,6,7,8-tetrahydrofolate + NADP(+) = (6R)-5,10-methenyltetrahydrofolate + NADPH. It catalyses the reaction (6R)-5,10-methenyltetrahydrofolate + H2O = (6R)-10-formyltetrahydrofolate + H(+). The protein operates within one-carbon metabolism; tetrahydrofolate interconversion. Functionally, catalyzes the oxidation of 5,10-methylenetetrahydrofolate to 5,10-methenyltetrahydrofolate and then the hydrolysis of 5,10-methenyltetrahydrofolate to 10-formyltetrahydrofolate. The sequence is that of Bifunctional protein FolD from Levilactobacillus brevis (strain ATCC 367 / BCRC 12310 / CIP 105137 / JCM 1170 / LMG 11437 / NCIMB 947 / NCTC 947) (Lactobacillus brevis).